A 411-amino-acid polypeptide reads, in one-letter code: GPI-anchor transamidase (411 aa).

Positions 1–22 (MRIAMHLPLLLLYIFLLPLSGA) are cleaved as a signal peptide. The Lumenal portion of the chain corresponds to 23–376 (NNTDAAHEVI…DIDSNECFFT (354 aa)). Active-site residues include H157 and C199. Residues N256 and N346 are each glycosylated (N-linked (GlcNAc...) asparagine). The helical transmembrane segment at 377–397 (SFKQSATIILALIVTILWFML) threads the bilayer. The Cytoplasmic portion of the chain corresponds to 398–411 (RGNTAKATYDLYTN).

It belongs to the peptidase C13 family. In terms of assembly, forms a complex with CDC91, GPI16, GPI17 and GAA1. In terms of processing, the disulfide bond between GPI8 and GPI16 is important for normal enzyme activity.

Its subcellular location is the endoplasmic reticulum membrane. The protein operates within glycolipid biosynthesis; glycosylphosphatidylinositol-anchor biosynthesis. Mediates GPI anchoring in the endoplasmic reticulum, by replacing a protein's C-terminal GPI attachment signal peptide with a pre-assembled GPI. During this transamidation reaction, the GPI transamidase forms a carbonyl intermediate with the substrate protein. This chain is GPI-anchor transamidase (GPI8), found in Saccharomyces cerevisiae (strain ATCC 204508 / S288c) (Baker's yeast).